The sequence spans 345 residues: Isocitrate/homoisocitrate dehydrogenase (345 aa).

69 to 71 (TTT) contacts NADH. (2R,3S)-homoisocitrate is bound by residues R86, R96, R111, Y118, K163, and N165. An NADH-binding site is contributed by N165. Positions 194, 218, and 222 each coordinate Mg(2+). NADH is bound by residues 251–255 (GSAPD) and N263.

Belongs to the isocitrate and isopropylmalate dehydrogenases family. It depends on Mn(2+) as a cofactor. The cofactor is Mg(2+).

It catalyses the reaction D-threo-isocitrate + NAD(+) = 2-oxoglutarate + CO2 + NADH. The enzyme catalyses (2R,3S)-homoisocitrate + NAD(+) = 2-oxoadipate + CO2 + NADH. It functions in the pathway amino-acid biosynthesis; L-lysine biosynthesis via AAA pathway; L-alpha-aminoadipate from 2-oxoglutarate: step 4/5. In terms of biological role, catalyzes the NAD(+)-dependent oxidative decarboxylation of homoisocitrate to 2-oxoadipate (alpha-ketoadipate), and of isocitrate to 2-oxoglutarate, at near equal efficiency. May thus play a dual role in glutamate and lysine biosynthesis in vivo. Preferentially uses NAD over NADP. The sequence is that of Isocitrate/homoisocitrate dehydrogenase from Pyrococcus horikoshii (strain ATCC 700860 / DSM 12428 / JCM 9974 / NBRC 100139 / OT-3).